The chain runs to 292 residues: uncharacterized protein (292 aa).

4 residues coordinate NADP(+): leucine 17, aspartate 55, asparagine 82, and lysine 115. Catalysis depends on serine 134, which acts as the Proton donor. NADP(+)-binding residues include tyrosine 148, lysine 152, and threonine 184. The active-site Proton acceptor is tyrosine 148. Residue lysine 152 is the Lowers pKa of active site Tyr of the active site.

It belongs to the short-chain dehydrogenases/reductases (SDR) family.

The protein localises to the cytoplasm. This is an uncharacterized protein from Schizosaccharomyces pombe (strain 972 / ATCC 24843) (Fission yeast).